Here is a 345-residue protein sequence, read N- to C-terminus: Acetylserotonin O-methyltransferase (345 aa).

S-adenosyl-L-methionine contacts are provided by residues tyrosine 147, tryptophan 164, aspartate 210, 235–237, and arginine 252; that span reads GDF. Residue histidine 255 is the Proton donor/acceptor of the active site. Residues aspartate 256, asparagine 302, and glutamine 306 each coordinate substrate.

This sequence belongs to the class I-like SAM-binding methyltransferase superfamily. Cation-independent O-methyltransferase family. In terms of assembly, homodimer. Expressed in the pineal gland (at protein level). In the retina, very low expression is found at the mRNA level, and not at the protein level.

It catalyses the reaction N-acetylserotonin + S-adenosyl-L-methionine = melatonin + S-adenosyl-L-homocysteine + H(+). It functions in the pathway aromatic compound metabolism; melatonin biosynthesis; melatonin from serotonin: step 1/2. In terms of biological role, catalyzes the transfer of a methyl group onto N-acetylserotonin, producing melatonin (N-acetyl-5-methoxytryptamine). Its function is as follows. Does not show Acetylserotonin O-methyltransferase activity. The chain is Acetylserotonin O-methyltransferase (ASMT) from Homo sapiens (Human).